Consider the following 161-residue polypeptide: uncharacterized protein (161 aa).

This is an uncharacterized protein from Caenorhabditis elegans.